A 357-amino-acid polypeptide reads, in one-letter code: Alanine racemase (357 aa).

Lys33 functions as the Proton acceptor; specific for D-alanine in the catalytic mechanism. N6-(pyridoxal phosphate)lysine is present on Lys33. A substrate-binding site is contributed by Arg129. Tyr253 serves as the catalytic Proton acceptor; specific for L-alanine. Position 301 (Met301) interacts with substrate.

This sequence belongs to the alanine racemase family. The cofactor is pyridoxal 5'-phosphate.

The enzyme catalyses L-alanine = D-alanine. It participates in amino-acid biosynthesis; D-alanine biosynthesis; D-alanine from L-alanine: step 1/1. Functionally, catalyzes the interconversion of L-alanine and D-alanine. May also act on other amino acids. The protein is Alanine racemase (alr) of Pseudomonas savastanoi pv. phaseolicola (strain 1448A / Race 6) (Pseudomonas syringae pv. phaseolicola (strain 1448A / Race 6)).